Here is a 581-residue protein sequence, read N- to C-terminus: Arginine--tRNA ligase (581 aa).

A 'HIGH' region motif is present at residues 126–136; it reads PNLAKEMHVGH.

The protein belongs to the class-I aminoacyl-tRNA synthetase family. As to quaternary structure, monomer.

Its subcellular location is the cytoplasm. It carries out the reaction tRNA(Arg) + L-arginine + ATP = L-arginyl-tRNA(Arg) + AMP + diphosphate. This Shewanella amazonensis (strain ATCC BAA-1098 / SB2B) protein is Arginine--tRNA ligase.